We begin with the raw amino-acid sequence, 1553 residues long: Sodium channel protein PaFPC1 (1553 aa).

Residues 1-68 are disordered; it reads MADNSPLIRE…SAHPDQALEQ (68 aa). The Cytoplasmic segment spans residues 1–140; it reads MADNSPLIRE…RVAISTMVQP (140 aa). The segment covering 34–60 has biased composition (basic and acidic residues); it reads ENGKTEENKDNSRDKGRGANKDRDGSA. A helical membrane pass occupies residues 141–159; it reads IFSYFIMITILIHCIFMIM. Over 160–165 the chain is Extracellular; sequence PATQTT. The helical transmembrane segment at 166–186 threads the bilayer; the sequence is YILELVFLSIYTIEVVVKVLA. The Cytoplasmic segment spans residues 187-200; that stretch reads RGFILHPFAYLRDP. Residues 201 to 218 form a helical membrane-spanning segment; sequence WNWLDFLVTLIGYITLVV. The Extracellular segment spans residues 219–224; sequence DLGHLY. The chain crosses the membrane as a helical span at residues 225 to 241; the sequence is ALRAFRVLRSWRTVTIV. Over 242-260 the chain is Cytoplasmic; the sequence is PGWRTIVDALSLSITSLKD. The chain crosses the membrane as a helical span at residues 261–280; the sequence is LVLLLLFSLFVFAVLGLQIY. The Extracellular segment spans residues 281–360; sequence MGVLTQKCVK…PNYGYTSFDT (80 aa). Intrachain disulfides connect cysteine 288-cysteine 337 and cysteine 328-cysteine 343. Residues asparagine 300, asparagine 308, asparagine 312, and asparagine 330 are each glycosylated (N-linked (GlcNAc...) asparagine). Positions 361 to 385 form an intramembrane region, pore-forming; that stretch reads FGWAFLSVFRLVTLDYWEDLYQLAL. A saxitoxin-binding site is contributed by glutamate 378. Residues 386–392 are Extracellular-facing; it reads RSAGPWH. The chain crosses the membrane as a helical span at residues 393–413; sequence ILFFIIVVFYGTFCFLNFILA. Residues 414 to 519 lie on the Cytoplasmic side of the membrane; it reads VVVMSYTHMV…GAIGAVVLSP (106 aa). A helical membrane pass occupies residues 520–538; sequence FFELFIAVIIVLNITFMAL. Over 539-549 the chain is Extracellular; that stretch reads DHHDMNIEFER. A helical membrane pass occupies residues 550–569; it reads ILRTGNYIFTSIYIVEAVLK. At 570–583 the chain is on the cytoplasmic side; sequence IIALSPKFYFKDSW. The helical transmembrane segment at 584 to 603 threads the bilayer; that stretch reads NVFDFIIVVFAILELGLEGV. The Extracellular portion of the chain corresponds to 604 to 605; sequence QG. The helical transmembrane segment at 606–623 threads the bilayer; it reads LSVFRSFRLLRVFRLAKF. At 624-639 the chain is on the cytoplasmic side; it reads WPTLNNFMSVMTKSYG. A helical membrane pass occupies residues 640-658; the sequence is AFVNVMYVMFLLLFIFAII. The Extracellular segment spans residues 659 to 686; it reads GMQLFGMNYIDNMERFPDGDLPRWNFTD. Residue asparagine 683 is glycosylated (N-linked (GlcNAc...) asparagine). The pore-forming intramembrane region spans 687-707; it reads FLHSFMIVFRALCGEWIESMW. Tetrodotoxin-binding residues include glutamate 701 and glutamate 704. Glutamate 704 serves as a coordination point for saxitoxin. Residues 708–719 are Extracellular-facing; that stretch reads DCMLVGDWSCIP. An intrachain disulfide couples cysteine 709 to cysteine 717. Residues 720-740 traverse the membrane as a helical segment; that stretch reads FFVAVFFVGNLVILNLLIALL. Over 741–857 the chain is Cytoplasmic; that stretch reads LNNYGSFCTS…VCFLLAKNKY (117 aa). The chain crosses the membrane as a helical span at residues 858-875; sequence FQKFVTAVLVITSVLLAL. The Extracellular segment spans residues 876-888; that stretch reads EDIYLPQRPVLVN. A helical membrane pass occupies residues 889-907; it reads ITLYVDYVLTAFFVIEMII. At 908–921 the chain is on the cytoplasmic side; sequence MLFAVGFKKYFTSK. Residues 922-940 traverse the membrane as a helical segment; that stretch reads WYWLDFIVVVAYLLNFVLM. Over 941–945 the chain is Extracellular; that stretch reads CAGIE. Residues 946–964 traverse the membrane as a helical segment; it reads ALQTLRLLRVFRLFRPLSK. At 965–981 the chain is on the cytoplasmic side; sequence VNGMQVVTSTLVEAVPH. Residues 982-1001 traverse the membrane as a helical segment; the sequence is IFNVILVGIFFWLVFAIMGV. Over 1002–1047 the chain is Extracellular; sequence QLFAGKFYKCVDENSTVLSHEITMDRNDCLHENYTWENSPMNFDHV. A disulfide bridge connects residues cysteine 1011 and cysteine 1030. The N-linked (GlcNAc...) asparagine glycan is linked to asparagine 1015. Asparagine 1028 carries an N-linked (GlcNAc...) asparagine; atypical glycan. Asparagine 1034 carries an N-linked (GlcNAc...) asparagine glycan. Positions 1048–1069 form an intramembrane region, pore-forming; the sequence is GNAYLSLLQVATFKGWLQIMND. A tetrodotoxin-binding site is contributed by glycine 1062. Tryptophan 1063 contacts saxitoxin. At 1070–1086 the chain is on the extracellular side; that stretch reads AIDSREVHKQPIRETNI. The chain crosses the membrane as a helical span at residues 1087 to 1108; that stretch reads YMYLYFIFFIVFGSFFILKLFV. The Cytoplasmic segment spans residues 1109 to 1171; sequence CILIDIFRQQ…LMYDISVNRK (63 aa). Residues 1133–1146 form a linker region that may regulate channel inactivation region; sequence QLIYRRAVMRTMSA. The chain crosses the membrane as a helical span at residues 1172–1189; it reads FEYTMMILIILNVAVMAI. The Extracellular portion of the chain corresponds to 1190–1200; the sequence is DHYGQSMEFSE. A helical membrane pass occupies residues 1201–1219; sequence VLDYLNLIFIIIFFVECVI. Over 1220 to 1231 the chain is Cytoplasmic; that stretch reads KVSGLRHHYFKD. A helical membrane pass occupies residues 1232–1249; that stretch reads PWNIIDFLYVVLAIAGLM. Topologically, residues 1250–1262 are extracellular; the sequence is LSDVIEKYFISPT. A helical transmembrane segment spans residues 1263 to 1279; sequence LLRILRILRVGRLLRYF. Residues 1280 to 1298 lie on the Cytoplasmic side of the membrane; the sequence is QSARGMRLLLLALRKALRT. The chain crosses the membrane as a helical span at residues 1299-1316; it reads LFNVSFLLFVIMFVYAVF. Residues 1317-1338 are Extracellular-facing; it reads GMEFFMHIRDAGAIDDVYNFKT. An intramembrane region (pore-forming) is located at residues 1339–1361; sequence FGQSIILLFQLATSAGWDGVYFA. Tetrodotoxin is bound by residues glycine 1354 and aspartate 1356. Aspartate 1356 contacts saxitoxin. The Extracellular segment spans residues 1362–1387; the sequence is IANEEDCRAPDHELGYPGNCGSRALG. Cysteine 1368 and cysteine 1381 are joined by a disulfide. Residues 1388-1410 traverse the membrane as a helical segment; it reads IAYLVSYLIITCLVVINMYAAVI. Topologically, residues 1411-1553 are cytoplasmic; sequence LDYVLEVYED…NAWRKHKQQN (143 aa).

Belongs to the sodium channel (TC 1.A.1.10) family. Detected in adult nerve cord, muscle, gut and mushroom-shaped accessory glands.

The protein resides in the cell membrane. With respect to regulation, inhibited by the pore blockers saxitoxin and tetrodotoxin. Functionally, mediates the voltage-dependent sodium ion permeability of excitable membranes. This is Sodium channel protein PaFPC1 from Periplaneta americana (American cockroach).